A 113-amino-acid chain; its full sequence is TYRO protein tyrosine kinase-binding protein (113 aa).

The N-terminal stretch at 1–27 (MGGLEPCSRLLLLPLLLAVGGLRPVQA) is a signal peptide. The Extracellular segment spans residues 28-40 (QAQSDCSCSTVSP). Residues 41–61 (GVLAGIVMGDLVLTVLIALAV) form a helical membrane-spanning segment. A Ca(2+)-binding site is contributed by aspartate 50. Topologically, residues 62-113 (YFLGRLVHRGRGAAEAATRKQRITETESPYQELQGQRSDVYSDLNMQRPYYK) are cytoplasmic. The tract at residues 75-113 (AEAATRKQRITETESPYQELQGQRSDVYSDLNMQRPYYK) is disordered. The ITAM domain occupies 80–108 (RKQRITETESPYQELQGQRSDVYSDLNMQ). Positions 87–100 (TESPYQELQGQRSD) are enriched in polar residues. Phosphotyrosine occurs at positions 91 and 102.

Belongs to the TYROBP family. As to quaternary structure, homodimer; disulfide-linked. Homotrimer; disulfide-linked. Homotetramer; disulfide-linked. Homotrimers and homotetramers form when low levels of partner receptors are available and is competitive with assembly with interacting receptors. They may represent alternative oligomerization states or may be intermediates in the receptor assembly process. Binding of a metal cation aids in homooligomerization through coordination of the metal ion by the subunits of the oligomer. Interacts with TREM1. Interacts with TREM2. Interacts with CLECSF5. Interacts with CD300LB and CD300C2. Interacts with CD300E. Interacts (via ITAM domain) with SYK (via SH2 domains); activates SYK mediating neutrophils and macrophages integrin-mediated activation. Interacts with KLRC2. Interacts with CD300H. Interacts with KLRD1. Interacts with SIGLEC1. In terms of processing, following ligand binding by associated receptors, tyrosine phosphorylated in the ITAM domain which leads to activation of additional tyrosine kinases and subsequent cell activation.

Its subcellular location is the cell membrane. Adapter protein which non-covalently associates with activating receptors found on the surface of a variety of immune cells to mediate signaling and cell activation following ligand binding by the receptors. TYROBP is tyrosine-phosphorylated in the ITAM domain following ligand binding by the associated receptors which leads to activation of additional tyrosine kinases and subsequent cell activation. Also has an inhibitory role in some cells. Non-covalently associates with activating receptors of the CD300 family to mediate cell activation. Also mediates cell activation through association with activating receptors of the CD200R family. Required for neutrophil activation mediated by integrin. Required for the activation of myeloid cells mediated by the CLEC5A/MDL1 receptor. Associates with natural killer (NK) cell receptors such as the KLRD1/KLRC2 heterodimer to mediate NK cell activation. Associates with TREM1 to mediate activation of neutrophils and monocytes. Associates with TREM2 on monocyte-derived dendritic cells to mediate up-regulation of chemokine receptor CCR7 and dendritic cell maturation and survival. Association with TREM2 mediates cytokine-induced formation of multinucleated giant cells which are formed by the fusion of macrophages. Stabilizes the TREM2 C-terminal fragment (TREM2-CTF) produced by TREM2 ectodomain shedding which suppresses the release of pro-inflammatory cytokines. In microglia, required with TREM2 for phagocytosis of apoptotic neurons. Required with ITGAM/CD11B in microglia to control production of microglial superoxide ions which promote the neuronal apoptosis that occurs during brain development. Promotes pro-inflammatory responses in microglia following nerve injury which accelerates degeneration of injured neurons. Positively regulates the expression of the IRAK3/IRAK-M kinase and IL10 production by liver dendritic cells and inhibits their T cell allosimulatory ability. Negatively regulates B cell proliferation. Required for CSF1-mediated osteoclast cytoskeletal organization. Positively regulates multinucleation during osteoclast development. The protein is TYRO protein tyrosine kinase-binding protein of Pan troglodytes (Chimpanzee).